The sequence spans 254 residues: Triosephosphate isomerase (254 aa).

Substrate is bound at residue 9–11; it reads NWK. H98 serves as the catalytic Electrophile. E170 acts as the Proton acceptor in catalysis. Substrate contacts are provided by residues G176, S215, and 236-237; that span reads GG.

The protein belongs to the triosephosphate isomerase family. In terms of assembly, homodimer.

It is found in the cytoplasm. The catalysed reaction is D-glyceraldehyde 3-phosphate = dihydroxyacetone phosphate. It participates in carbohydrate biosynthesis; gluconeogenesis. The protein operates within carbohydrate degradation; glycolysis; D-glyceraldehyde 3-phosphate from glycerone phosphate: step 1/1. Its function is as follows. Involved in the gluconeogenesis. Catalyzes stereospecifically the conversion of dihydroxyacetone phosphate (DHAP) to D-glyceraldehyde-3-phosphate (G3P). This is Triosephosphate isomerase from Buchnera aphidicola subsp. Cinara cedri (strain Cc).